Consider the following 511-residue polypeptide: Cytochrome P450 monooxyhenase eriC (511 aa).

A helical transmembrane segment spans residues 2 to 22 (VLADFISIPTVSIACLAVLGI). Residue C445 coordinates heme.

It belongs to the cytochrome P450 family. Heme serves as cofactor.

It localises to the membrane. It carries out the reaction erinacol + reduced [NADPH--hemoprotein reductase] + O2 = cyathadiol + oxidized [NADPH--hemoprotein reductase] + H2O + H(+). The protein operates within secondary metabolite biosynthesis. Functionally, cytochrome P450 monooxygenase; part of the gene cluster that mediates the biosynthesis of erinacines, cyathane-xylosides that show unique biological activities, including leishmanicidal activity, stimulating activity for nerve growth-factor synthesis, and agonistic activity toward the kappa opioid receptor. Within the pathway, eriC hydroxylates erinacol at C-15 of the seven-membered ring to yield cyathadiol. The first step of the erinacines biosynthesis pathway is catalyzed by the geranylgeranyl diphosphate (GGPP) synthase eriE via conversion of farnesyl pyrophosphate and isopentyl pyrophosphate into geranylgeranyl pyrophosphate (GGPP). GGPP is then substrate of the diterpene cyclase eriG for the production of cyatha-3,12-diene. The cytochrome P450 monooxygenase eriI then hydroxylates cyatha-3,12-diene at C-14 of the seven-membered ring to produce erinacol, which is further hydroxylated at C-15 by the cytochrome P450 monooxygenase eriC to yield cyathadiol. The cytochrome P450 monooxygenase eriA then catalyzes C-11 hydroxylation in the presence of the short chain dehydrogenase/reductase (SDR) eriH, which leads to the production of cyathatriol. The acetyltransferase eriL converts cyathatriol into 11-O-acetyl-cyathatriol. The SDR eriH catalyzes further oxidation of 11-O-acetyl-cyathatriol into 1-O-acetylcyathin A3. Finally, the glycosyl transferase eriJ tranfers xylose from UDP-xylose onto C-14 of 11-O-acetyl-cyathatriol to form eracine Q. EriJ is also able to convert 11-O-acetyl-cyathatriol to eracine Q2 by using UDP-D-glucose as cosubstrate, but at a lower rate. The sequence is that of Cytochrome P450 monooxyhenase eriC from Hericium erinaceus (Lion's mane mushroom).